A 238-amino-acid chain; its full sequence is MDRPAYRRVVVKLSGEYLAGSQPFGIDQPTIDRIAGDLAEARALGVEIAVVVGGGNIFRGVEVSSRGVSRPTGDTMGMLATVMNCLALEAALERRGQSARALSSFVMPEVCELFTRRAAHKYLAEDRIVLLAGGTGNPYFTTDTTAVLRAAEIGAQAVLKATNVDGVYSSDPKKDPSAKRFERLSHSQALEGGYKVMDATAFALARETALPIIVFSIAEPGSIGAILKGTGRGTIVAS.

12–15 contributes to the ATP binding site; it reads KLSG. Residue Gly-54 coordinates UMP. 2 residues coordinate ATP: Gly-55 and Arg-59. Residues Asp-74 and 135–142 each bind UMP; that span reads TGNPYFTT. Positions 162, 163, 168, and 171 each coordinate ATP.

It belongs to the UMP kinase family. In terms of assembly, homohexamer.

The protein localises to the cytoplasm. The enzyme catalyses UMP + ATP = UDP + ADP. The protein operates within pyrimidine metabolism; CTP biosynthesis via de novo pathway; UDP from UMP (UMPK route): step 1/1. With respect to regulation, inhibited by UTP. Catalyzes the reversible phosphorylation of UMP to UDP. This Nitrobacter winogradskyi (strain ATCC 25391 / DSM 10237 / CIP 104748 / NCIMB 11846 / Nb-255) protein is Uridylate kinase.